We begin with the raw amino-acid sequence, 248 residues long: Sugar fermentation stimulation protein homolog (248 aa).

Belongs to the SfsA family.

The sequence is that of Sugar fermentation stimulation protein homolog from Prochlorococcus marinus subsp. pastoris (strain CCMP1986 / NIES-2087 / MED4).